Here is a 202-residue protein sequence, read N- to C-terminus: Peptide methionine sulfoxide reductase A3 (202 aa).

The tract at residues 1-34 (MNILNRLGLGSSGQTNMDPSPIAQGNDDDTPAPG) is disordered. Position 189 is a phosphoserine (serine 189).

This sequence belongs to the MsrA Met sulfoxide reductase family. Expressed in rosette and cauline leaves, and at lower levels in roots, stems and flowers (at protein level).

The protein resides in the cytoplasm. It is found in the cytosol. The catalysed reaction is L-methionyl-[protein] + [thioredoxin]-disulfide + H2O = L-methionyl-(S)-S-oxide-[protein] + [thioredoxin]-dithiol. It carries out the reaction [thioredoxin]-disulfide + L-methionine + H2O = L-methionine (S)-S-oxide + [thioredoxin]-dithiol. Functionally, catalyzes the reduction of methionine sulfoxide (MetSO) to methionine in proteins. Plays a protective role against oxidative stress by restoring activity to proteins that have been inactivated by methionine oxidation. May prevent cellular oxidative damage due to light exposure. MSRA family specifically reduces the MetSO S-enantiomer. This chain is Peptide methionine sulfoxide reductase A3 (MSRA3), found in Arabidopsis thaliana (Mouse-ear cress).